The primary structure comprises 334 residues: Protein-methionine-sulfoxide reductase catalytic subunit MsrP (334 aa).

Residues 1–44 (MKKVSRLTEADVTAESAFFMQRRQVLKALGITTAALSLPTAAHA) constitute a signal peptide (tat-type signal). Mo-molybdopterin-binding positions include Asn-88, 91–92 (YE), Cys-146, Thr-181, Asn-233, Arg-238, and 249–251 (GIK).

This sequence belongs to the MsrP family. Heterodimer of a catalytic subunit (MsrP) and a heme-binding subunit (MsrQ). Mo-molybdopterin serves as cofactor. In terms of processing, predicted to be exported by the Tat system. The position of the signal peptide cleavage has not been experimentally proven.

The protein resides in the periplasm. The enzyme catalyses L-methionyl-[protein] + a quinone + H2O = L-methionyl-(S)-S-oxide-[protein] + a quinol. It catalyses the reaction L-methionyl-[protein] + a quinone + H2O = L-methionyl-(R)-S-oxide-[protein] + a quinol. In terms of biological role, part of the MsrPQ system that repairs oxidized periplasmic proteins containing methionine sulfoxide residues (Met-O), using respiratory chain electrons. Thus protects these proteins from oxidative-stress damage caused by reactive species of oxygen and chlorine generated by the host defense mechanisms. MsrPQ is essential for the maintenance of envelope integrity under bleach stress, rescuing a wide series of structurally unrelated periplasmic proteins from methionine oxidation. The catalytic subunit MsrP is non-stereospecific, being able to reduce both (R-) and (S-) diastereoisomers of methionine sulfoxide. In Cronobacter sakazakii (strain ATCC BAA-894) (Enterobacter sakazakii), this protein is Protein-methionine-sulfoxide reductase catalytic subunit MsrP.